Reading from the N-terminus, the 179-residue chain is MEIRDNNKVNLCFAFDNLRKELSRPYGILFTNNKVFLDFVSKSIQQGFKVITVGDYVSRVLEENGIIPFLEVIDGKTKRSIPQHRAIVKNKEYRVTNEAGKIRFEIFEIIENILKDRDGGVVFVNGEEDLLVIPVILSANNGDIVIYGQPNAGAVVIIVNEMIKWRVRDILEKAVVEEC.

5 residues coordinate GTP: Asp55, Val57, Asp74, Lys76, and Glu128.

The protein belongs to the GTP-dependent DPCK family.

The catalysed reaction is 3'-dephospho-CoA + GTP = GDP + CoA + H(+). It functions in the pathway cofactor biosynthesis; coenzyme A biosynthesis. Catalyzes the GTP-dependent phosphorylation of the 3'-hydroxyl group of dephosphocoenzyme A to form coenzyme A (CoA). The protein is GTP-dependent dephospho-CoA kinase of Saccharolobus islandicus (strain M.16.27) (Sulfolobus islandicus).